Consider the following 89-residue polypeptide: MALLDFFLSRKKTTANIAKERLQIIVAERRRGDSEPHYLPQLKRDLLAVICKYVQIDPEMVSVQLEQKGDDISVLELNVTLPENEEAPK.

It belongs to the MinE family.

Its function is as follows. Prevents the cell division inhibition by proteins MinC and MinD at internal division sites while permitting inhibition at polar sites. This ensures cell division at the proper site by restricting the formation of a division septum at the midpoint of the long axis of the cell. The protein is Cell division topological specificity factor of Edwardsiella ictaluri (strain 93-146).